Here is a 158-residue protein sequence, read N- to C-terminus: Transcription elongation factor GreA (158 aa).

A coiled-coil region spans residues 8-74 (TKGGYNKLKD…TLERVLSTAT (67 aa)).

Belongs to the GreA/GreB family.

In terms of biological role, necessary for efficient RNA polymerase transcription elongation past template-encoded arresting sites. The arresting sites in DNA have the property of trapping a certain fraction of elongating RNA polymerases that pass through, resulting in locked ternary complexes. Cleavage of the nascent transcript by cleavage factors such as GreA or GreB allows the resumption of elongation from the new 3'terminus. GreA releases sequences of 2 to 3 nucleotides. The polypeptide is Transcription elongation factor GreA (Chloroherpeton thalassium (strain ATCC 35110 / GB-78)).